The sequence spans 508 residues: GATA zinc finger domain-containing protein 13 (508 aa).

Disordered stretches follow at residues 20-51 (YSKNNNNNNNNNNNNNINNNNNNNNNNNINNN) and 203-296 (MSII…PEIE). Low complexity predominate over residues 23-51 (NNNNNNNNNNNNNINNNNNNNNNNNINNN). Residues 203-224 (MSIIPSDNFPTPQLPLETNTDL) are compositionally biased toward polar residues. The span at 225–247 (NNTSDCSSTTFSSPPSSAFNSPN) shows a compositional bias: low complexity. Residues 248–266 (LQNDYTQPQNQKSQSSTIV) are compositionally biased toward polar residues. Over residues 269 to 279 (NSSKSKSKNNK) the composition is skewed to basic residues. Residues 327–354 (CSICKIKCSIYWRRILINEVRTSVCNAC) form a GATA-type zinc finger. The stretch at 356 to 433 (LRTMKKTKKE…NNNNNNNNNN (78 aa)) forms a coiled coil. The span at 399 to 482 (TTTTTTTTTS…NNNNNDNYND (84 aa)) shows a compositional bias: low complexity. The tract at residues 399 to 484 (TTTTTTTTTS…NNNDNYNDSI (86 aa)) is disordered.

The protein is GATA zinc finger domain-containing protein 13 (gtaM) of Dictyostelium discoideum (Social amoeba).